A 197-amino-acid chain; its full sequence is uncharacterized protein (197 aa).

An SIS domain is found at 33–184 (MISKIMDASS…IAEFMSILGK (152 aa)).

It belongs to the SIS family. PHI subfamily.

This is an uncharacterized protein from Methanothermobacter thermautotrophicus (strain ATCC 29096 / DSM 1053 / JCM 10044 / NBRC 100330 / Delta H) (Methanobacterium thermoautotrophicum).